The chain runs to 405 residues: Syndecan-3 (405 aa).

The N-terminal stretch at 1-22 is a signal peptide; it reads MPAELRRLAVLLLLLSARAALA. The Extracellular portion of the chain corresponds to 23–347; the sequence is QPWRNENYER…PQKNILERKE (325 aa). The disordered stretch occupies residues 31–59; sequence ERPVDLEGSGDDDPFGDDELDDIYSGSGS. Acidic residues predominate over residues 38 to 52; sequence GSGDDDPFGDDELDD. Ser39, Ser55, Ser57, Ser59, and Ser66 each carry an O-linked (Xyl...) (glycosaminoglycan) serine glycan. Disordered stretches follow at residues 134–159 and 191–301; these read TTTA…ATTT and TRAT…ELGN. Low complexity predominate over residues 191 to 201; it reads TRATTLETPTT. Residues 202–237 are compositionally biased toward polar residues; that stretch reads SIPETSVLTEVTTSRLVPSSTAKPRSLPKPSTSRTA. O-linked (Xyl...) (glycosaminoglycan) serine glycans are attached at residues Ser280, Ser283, and Ser330. Residues 348–372 traverse the membrane as a helical segment; it reads VLIAVIVGGVVGALFAAFLVMLLIY. The Cytoplasmic portion of the chain corresponds to 373–405; that stretch reads RMKKKDEGSYTLEEPKQANVTYQKPDKQEEFYA.

This sequence belongs to the syndecan proteoglycan family. O-glycosylated within the Thr/Ser-rich region which could interact with lectin domains on other molecules. Proximal chondrogenic central core of embryonic limb buds where cartilage differentiation is being initiated.

It is found in the membrane. Cell surface proteoglycan that may bear both heparan sulfate and chondroitin sulfate. The multiple functional domains provide potential sites for mediating the adhesive cell-matrix interactions and cytoskeletal reorganization involved in limb chondrogenesis. Interaction with other matrix ligands as well as phosphorylation and shedding of the ectodomain might be involved in cell shape changes that occur during chondrogenesis. Furthermore, shedding of the ectodomain might break the adhesive interactions that promoted condensation, thus facilitating the deposition of cartilage matrix molecules. The polypeptide is Syndecan-3 (SDC3) (Gallus gallus (Chicken)).